A 139-amino-acid chain; its full sequence is Cellular retinoic acid-binding protein 2 (139 aa).

Residues 21-31 (KALGVNMMMRK) carry the Nuclear localization signal motif. Residue K103 forms a Glycyl lysine isopeptide (Lys-Gly) (interchain with G-Cter in SUMO) linkage. 134-136 (RVY) contacts all-trans-retinoate.

Belongs to the calycin superfamily. Fatty-acid binding protein (FABP) family. As to quaternary structure, interacts with importin alpha, RXR and RARA. In terms of processing, sumoylated in response to retinoic acid binding, sumoylation is critical for dissociation from ER and subsequent nuclear translocation.

The protein resides in the cytoplasm. The protein localises to the endoplasmic reticulum. It localises to the nucleus. In terms of biological role, transports retinoic acid to the nucleus. Regulates the access of retinoic acid to the nuclear retinoic acid receptors. The chain is Cellular retinoic acid-binding protein 2 (Crabp2) from Rattus norvegicus (Rat).